Consider the following 479-residue polypeptide: Bifunctional protein HldE (479 aa).

Residues 1-322 (MLAETQLAPI…AALERTAAQI (322 aa)) form a ribokinase region. Residue 198–201 (NRRE) coordinates ATP. Asp-267 is a catalytic residue. The cytidylyltransferase stretch occupies residues 350-479 (FTNGCFDLVH…TSSLVAKART (130 aa)).

It in the N-terminal section; belongs to the carbohydrate kinase PfkB family. The protein in the C-terminal section; belongs to the cytidylyltransferase family. As to quaternary structure, homodimer.

It carries out the reaction D-glycero-beta-D-manno-heptose 7-phosphate + ATP = D-glycero-beta-D-manno-heptose 1,7-bisphosphate + ADP + H(+). It catalyses the reaction D-glycero-beta-D-manno-heptose 1-phosphate + ATP + H(+) = ADP-D-glycero-beta-D-manno-heptose + diphosphate. The protein operates within nucleotide-sugar biosynthesis; ADP-L-glycero-beta-D-manno-heptose biosynthesis; ADP-L-glycero-beta-D-manno-heptose from D-glycero-beta-D-manno-heptose 7-phosphate: step 1/4. Its pathway is nucleotide-sugar biosynthesis; ADP-L-glycero-beta-D-manno-heptose biosynthesis; ADP-L-glycero-beta-D-manno-heptose from D-glycero-beta-D-manno-heptose 7-phosphate: step 3/4. Its function is as follows. Catalyzes the phosphorylation of D-glycero-D-manno-heptose 7-phosphate at the C-1 position to selectively form D-glycero-beta-D-manno-heptose-1,7-bisphosphate. Catalyzes the ADP transfer from ATP to D-glycero-beta-D-manno-heptose 1-phosphate, yielding ADP-D-glycero-beta-D-manno-heptose. The polypeptide is Bifunctional protein HldE (Azorhizobium caulinodans (strain ATCC 43989 / DSM 5975 / JCM 20966 / LMG 6465 / NBRC 14845 / NCIMB 13405 / ORS 571)).